The primary structure comprises 285 residues: Diaminopimelate epimerase (285 aa).

Substrate is bound by residues Asn-15 and Asn-68. Cys-77 (proton donor) is an active-site residue. Substrate is bound by residues 78–79, Asn-165, Asn-201, and 219–220; these read GN and ER. Cys-228 serves as the catalytic Proton acceptor. 229–230 is a substrate binding site; sequence GT.

It belongs to the diaminopimelate epimerase family. In terms of assembly, homodimer.

Its subcellular location is the cytoplasm. It catalyses the reaction (2S,6S)-2,6-diaminopimelate = meso-2,6-diaminopimelate. The protein operates within amino-acid biosynthesis; L-lysine biosynthesis via DAP pathway; DL-2,6-diaminopimelate from LL-2,6-diaminopimelate: step 1/1. Its function is as follows. Catalyzes the stereoinversion of LL-2,6-diaminopimelate (L,L-DAP) to meso-diaminopimelate (meso-DAP), a precursor of L-lysine and an essential component of the bacterial peptidoglycan. The chain is Diaminopimelate epimerase from Synechococcus sp. (strain JA-3-3Ab) (Cyanobacteria bacterium Yellowstone A-Prime).